Reading from the N-terminus, the 259-residue chain is UPF0246 protein PputW619_0896 (259 aa).

It belongs to the UPF0246 family.

This is UPF0246 protein PputW619_0896 from Pseudomonas putida (strain W619).